The primary structure comprises 398 residues: tRNA-specific 2-thiouridylase MnmA (398 aa).

Residues 18-25 (AMSGGVDS) and L44 contribute to the ATP site. C112 acts as the Nucleophile in catalysis. C112 and C213 form a disulfide bridge. G136 lines the ATP pocket. Residues 163–165 (RDQ) form an interaction with tRNA region. C213 acts as the Cysteine persulfide intermediate in catalysis.

It belongs to the MnmA/TRMU family.

It localises to the cytoplasm. The catalysed reaction is S-sulfanyl-L-cysteinyl-[protein] + uridine(34) in tRNA + AH2 + ATP = 2-thiouridine(34) in tRNA + L-cysteinyl-[protein] + A + AMP + diphosphate + H(+). In terms of biological role, catalyzes the 2-thiolation of uridine at the wobble position (U34) of tRNA, leading to the formation of s(2)U34. This chain is tRNA-specific 2-thiouridylase MnmA, found in Sinorhizobium medicae (strain WSM419) (Ensifer medicae).